The sequence spans 382 residues: tRNA (guanine(26)-N(2))-dimethyltransferase (382 aa).

The Trm1 methyltransferase domain occupies 4–370; sequence TEVIEGKARL…REFSEILECV (367 aa). Residues R44, R69, D87, D113, and A114 each coordinate S-adenosyl-L-methionine. Positions 244, 247, 261, and 264 each coordinate Zn(2+).

Belongs to the class I-like SAM-binding methyltransferase superfamily. Trm1 family.

It catalyses the reaction guanosine(26) in tRNA + 2 S-adenosyl-L-methionine = N(2)-dimethylguanosine(26) in tRNA + 2 S-adenosyl-L-homocysteine + 2 H(+). Its function is as follows. Dimethylates a single guanine residue at position 26 of a number of tRNAs using S-adenosyl-L-methionine as donor of the methyl groups. This chain is tRNA (guanine(26)-N(2))-dimethyltransferase, found in Metallosphaera sedula (strain ATCC 51363 / DSM 5348 / JCM 9185 / NBRC 15509 / TH2).